A 331-amino-acid polypeptide reads, in one-letter code: Apoptosis inhibitor UL38 (331 aa).

Positions 246–309 (TGAQPSHAPA…ELSSSPPLPP (64 aa)) are disordered. Residues 275–304 (AAAATPPSSAATTPPSSVVPASVESELSSS) show a composition bias toward low complexity.

Belongs to the beta-herpesvirinae UL38 protein family. In terms of assembly, interacts with host MDM2; this interaction leads to the stabilization of host TP53. Interacts with host TSC2; this interaction prevents host cell stress responses. Interacts with host USP24.

Its subcellular location is the host cytoplasm. The protein localises to the host nucleus. Its function is as follows. Plays a role in the inhibition of host apoptosis to facilitate efficient viral replication. Promotes stabilization and inactivation of host TP53 through interaction with host MDM2. Induces host mTORC1 activation by antagonizing the ability of host TSC1/2 to negatively regulate mTORC1. Thus, inhibits a growth regulatory pathway to facilitate viral replication. Prevents premature cell host cell death by blocking host ubiquitin-specific protease 24/USP24-mediated autophagic ferritin degradation in lysosomes thus maintaining lysosome integrity and cellular viability. Involved in the activation of host ENO2 leading to enhanced glycolysis and UDP-sugar metabolism in order to enable the expression of viral glycoproteins. The sequence is that of Apoptosis inhibitor UL38 (UL38) from Human cytomegalovirus (strain Merlin) (HHV-5).